We begin with the raw amino-acid sequence, 249 residues long: Aspartate/glutamate leucyltransferase (249 aa).

This sequence belongs to the R-transferase family. Bpt subfamily.

The protein localises to the cytoplasm. It carries out the reaction N-terminal L-glutamyl-[protein] + L-leucyl-tRNA(Leu) = N-terminal L-leucyl-L-glutamyl-[protein] + tRNA(Leu) + H(+). It catalyses the reaction N-terminal L-aspartyl-[protein] + L-leucyl-tRNA(Leu) = N-terminal L-leucyl-L-aspartyl-[protein] + tRNA(Leu) + H(+). In terms of biological role, functions in the N-end rule pathway of protein degradation where it conjugates Leu from its aminoacyl-tRNA to the N-termini of proteins containing an N-terminal aspartate or glutamate. This is Aspartate/glutamate leucyltransferase from Azorhizobium caulinodans (strain ATCC 43989 / DSM 5975 / JCM 20966 / LMG 6465 / NBRC 14845 / NCIMB 13405 / ORS 571).